Reading from the N-terminus, the 953-residue chain is 26S proteasome non-ATPase regulatory subunit 1 (953 aa).

N-acetylmethionine is present on Met-1. Thr-273 is modified (phosphothreonine). The segment at 277–319 is disordered; that stretch reads SVPGSTNTGTVPGSEKDSDPMETEEKTASAVAGKTPDASPEPK. Ser-290 carries the phosphoserine modification. Residues 290 to 303 are compositionally biased toward basic and acidic residues; that stretch reads SEKDSDPMETEEKT. An N6-acetyllysine modification is found at Lys-310. Phosphothreonine is present on Thr-311. Residue Ser-315 is modified to Phosphoserine. PC repeat units lie at residues 403–436, 441–474, 476–510, 511–545, 547–580, 581–616, 617–649, 651–685, 686–726, and 729–761; these read TATA…PGSA, GGLY…DIVR, GGSL…VTGE, AAGL…EKIL, GLAV…ILRR, SGMY…DVRR, AAVE…PHVR, GAAM…YVRQ, GALI…DVMA, and GAIL…PSVV. Lys-720 is subject to N6-acetyllysine. Residue Thr-830 is modified to Phosphothreonine. Ser-834 carries the phosphoserine modification. Disordered stretches follow at residues 839–881 and 930–953; these read AKKK…LDNP and AHGP…YIDD. Composition is skewed to basic and acidic residues over residues 842–852 and 859–872; these read KEKEKEKKEEE and AEKK…KEPE. Residues 936 to 953 are compositionally biased toward acidic residues; the sequence is EEEEQEPEPPEPFEYIDD.

It belongs to the proteasome subunit S1 family. In terms of assembly, component of the 19S proteasome regulatory particle complex. The 26S proteasome consists of a 20S core particle (CP) and two 19S regulatory subunits (RP). The regulatory particle is made of a lid composed of 9 subunits, a base containing 6 ATPases and few additional components including PSMD1. Interacts with ADRM1. Interacts with ZFAND1.

Its function is as follows. Component of the 26S proteasome, a multiprotein complex involved in the ATP-dependent degradation of ubiquitinated proteins. This complex plays a key role in the maintenance of protein homeostasis by removing misfolded or damaged proteins, which could impair cellular functions, and by removing proteins whose functions are no longer required. Therefore, the proteasome participates in numerous cellular processes, including cell cycle progression, apoptosis, or DNA damage repair. The protein is 26S proteasome non-ATPase regulatory subunit 1 (Psmd1) of Mus musculus (Mouse).